A 100-amino-acid chain; its full sequence is Virion membrane protein OPG135 (100 aa).

The signal sequence occupies residues 1 to 22 (MSCYTAILKSVGGLALFQVANG). The Intravirion segment spans residues 23–45 (AIDLCRHFFMYFCEQKLRPNSFW). Residues 46–66 (FVVVRAIASMIMYLVLGIALL) form a helical membrane-spanning segment. The Virion surface segment spans residues 67–83 (YISEQDDKKNTNNDSNS). Positions 75-100 (KNTNNDSNSNNDKRNVSSINSNSSHK) are disordered. Residues asparagine 79, asparagine 89, and asparagine 96 are each glycosylated (N-linked (GlcNAc...) asparagine; by host).

This sequence belongs to the chordopoxvirinae A9 family.

Its subcellular location is the virion membrane. The protein localises to the host cytoplasm. Functionally, envelope protein. Required for an early step in virion morphogenesis. This chain is Virion membrane protein OPG135 (OPG135), found in Monkeypox virus.